The chain runs to 531 residues: Transactivator/viroplasmin protein (531 aa).

2 disordered regions span residues 80–101 (ASGK…TATG) and 505–531 (CKSE…SVLV). Polar residues-rich tracts occupy residues 91-100 (SATSPEQTAT) and 505-517 (CKSE…TSEE). Over residues 518-531 (GLQESEDEDFSVLV) the composition is skewed to acidic residues.

This sequence belongs to the caulimoviridae viroplasmin family.

It localises to the host cytoplasm. In terms of biological role, enhances the translation of downstream ORFs on polycistronic mRNAs. This Cestrum yellow leaf curling virus (CmYLCV) protein is Transactivator/viroplasmin protein.